The sequence spans 614 residues: DBH-like monooxygenase protein 1 homolog (614 aa).

Residues 1-22 (MSENKLFCAIVFLTSLFCSTCS) form the signal peptide. Topologically, residues 23 to 593 (QGTRFVHSAA…CRKDSAIQCE (571 aa)) are lumenal. Residues 37 to 150 (RRYNIKWGFD…STVRVIWAFH (114 aa)) form the DOMON domain. An N-linked (GlcNAc...) asparagine glycan is attached at Asn116. Residue Tyr205 is part of the active site. 2 disulfide bridges follow: Cys207–Cys259 and Cys244–Cys271. Residues His237 and His238 each coordinate Cu cation. Asn249 is a glycosylation site (N-linked (GlcNAc...) asparagine). Cu cation contacts are provided by His309, His391, and His393. Cystine bridges form between Cys366–Cys482, Cys370–Cys552, and Cys445–Cys467. The active site involves His391. The N-linked (GlcNAc...) asparagine glycan is linked to Asn454. Residue Met466 participates in Cu cation binding. The N-linked (GlcNAc...) asparagine glycan is linked to Asn519. The helical transmembrane segment at 594 to 612 (HSLALLLTACLLLILQTCL) threads the bilayer.

The protein belongs to the copper type II ascorbate-dependent monooxygenase family. It depends on Cu(2+) as a cofactor.

The protein localises to the endoplasmic reticulum membrane. The chain is DBH-like monooxygenase protein 1 homolog (moxd1) from Danio rerio (Zebrafish).